Reading from the N-terminus, the 135-residue chain is UPF0329 protein ECU07_1860/ECU10_0040/ECU11_2100 (135 aa).

This sequence belongs to the UPF0329 family.

In Encephalitozoon cuniculi (strain GB-M1) (Microsporidian parasite), this protein is UPF0329 protein ECU07_1860/ECU10_0040/ECU11_2100.